We begin with the raw amino-acid sequence, 309 residues long: Protein FdhE homolog (309 aa).

The protein belongs to the FdhE family.

It is found in the cytoplasm. Functionally, necessary for formate dehydrogenase activity. The polypeptide is Protein FdhE homolog (Cronobacter sakazakii (strain ATCC BAA-894) (Enterobacter sakazakii)).